Reading from the N-terminus, the 349-residue chain is Phosphoribosylformylglycinamidine cyclo-ligase (349 aa).

This sequence belongs to the AIR synthase family.

It localises to the cytoplasm. The enzyme catalyses 2-formamido-N(1)-(5-O-phospho-beta-D-ribosyl)acetamidine + ATP = 5-amino-1-(5-phospho-beta-D-ribosyl)imidazole + ADP + phosphate + H(+). The protein operates within purine metabolism; IMP biosynthesis via de novo pathway; 5-amino-1-(5-phospho-D-ribosyl)imidazole from N(2)-formyl-N(1)-(5-phospho-D-ribosyl)glycinamide: step 2/2. This Bordetella petrii (strain ATCC BAA-461 / DSM 12804 / CCUG 43448) protein is Phosphoribosylformylglycinamidine cyclo-ligase.